Reading from the N-terminus, the 160-residue chain is Transcription elongation factor GreA (160 aa).

Residues 49–75 (SEYDEAKNDQAFTEGRIIQLENMLKNA) adopt a coiled-coil conformation.

Belongs to the GreA/GreB family.

Its function is as follows. Necessary for efficient RNA polymerase transcription elongation past template-encoded arresting sites. The arresting sites in DNA have the property of trapping a certain fraction of elongating RNA polymerases that pass through, resulting in locked ternary complexes. Cleavage of the nascent transcript by cleavage factors such as GreA or GreB allows the resumption of elongation from the new 3'terminus. GreA releases sequences of 2 to 3 nucleotides. This chain is Transcription elongation factor GreA, found in Clostridium beijerinckii (strain ATCC 51743 / NCIMB 8052) (Clostridium acetobutylicum).